A 30-amino-acid polypeptide reads, in one-letter code: Brevinin-2Ej (30 aa).

Cys-24 and Cys-30 are oxidised to a cystine.

In terms of tissue distribution, expressed by the skin glands.

Its subcellular location is the secreted. Its function is as follows. Shows antibacterial activity against representative Gram-negative and Gram-positive bacterial species, and hemolytic activity. In Pelophylax ridibundus (Marsh frog), this protein is Brevinin-2Ej.